The following is a 285-amino-acid chain: Protein HtrL (285 aa).

The polypeptide is Protein HtrL (Escherichia coli (strain K12)).